Consider the following 297-residue polypeptide: N-acetylneuraminate lyase (297 aa).

Residues serine 47 and threonine 48 each contribute to the aceneuramate site. Tyrosine 137 serves as the catalytic Proton donor. Residue lysine 165 is the Schiff-base intermediate with substrate of the active site. Threonine 167, glycine 189, aspartate 191, glutamate 192, and serine 208 together coordinate aceneuramate.

Belongs to the DapA family. NanA subfamily. In terms of assembly, homotetramer.

The protein localises to the cytoplasm. The enzyme catalyses aceneuramate = aldehydo-N-acetyl-D-mannosamine + pyruvate. Its pathway is amino-sugar metabolism; N-acetylneuraminate degradation; D-fructose 6-phosphate from N-acetylneuraminate: step 1/5. Catalyzes the reversible aldol cleavage of N-acetylneuraminic acid (sialic acid; Neu5Ac) to form pyruvate and N-acetylmannosamine (ManNAc) via a Schiff base intermediate. In Escherichia coli (strain SMS-3-5 / SECEC), this protein is N-acetylneuraminate lyase.